Here is a 740-residue protein sequence, read N- to C-terminus: Protein SMY2 (740 aa).

A phosphoserine mark is found at Ser-12 and Ser-96. Residue Thr-129 is modified to Phosphothreonine. Residues 205–261 enclose the GYF domain; the sequence is ESSWRYIDTQGQIHGPFTTQMMSQWYIGGYFASTLQISRLGSTPETLGINDIFITLG. Thr-311 is modified (phosphothreonine). Disordered regions lie at residues 346–510, 523–548, and 567–592; these read ISQT…KEEL, PSNQ…SPLK, and QSSS…VTSK. Basic and acidic residues predominate over residues 364–439; the sequence is EKGKKEKSES…KKSEKTKKDT (76 aa). A coiled-coil region spans residues 369–440; sequence EKSESVAKAL…KSEKTKKDTQ (72 aa). Positions 452–467 are enriched in low complexity; that stretch reads LPSLNSSSANPAPWAS. Residues 474-486 show a composition bias toward polar residues; it reads AIETSIKNGVSST. The segment covering 500–510 has biased composition (basic and acidic residues); the sequence is NSKEEKQKEEL. Residues 523-536 show a composition bias toward polar residues; it reads PSNQTIDIKSQFQK. Residue Ser-545 is modified to Phosphoserine. Ser-602 bears the Phosphoserine mark.

It belongs to the SMY2/mpd2 family. Interacts with EAP1 and MSL5 (via the GYP domain).

The protein localises to the cytoplasm. Suppressor of the MYO2 gene. This is Protein SMY2 (SMY2) from Saccharomyces cerevisiae (strain ATCC 204508 / S288c) (Baker's yeast).